Here is a 268-residue protein sequence, read N- to C-terminus: Ubiquinone biosynthesis protein COQ4 homolog 1, mitochondrial (268 aa).

Basic residues predominate over residues 1–10; the sequence is MFLRRVHPVR. The transit peptide at 1 to 18 directs the protein to the mitochondrion; it reads MFLRRVHPVRLGHASQRS. The disordered stretch occupies residues 1 to 44; that stretch reads MFLRRVHPVRLGHASQRSLTTTKSRNESTTTTVEAPQAAPSPPP. Residues 20-38 are compositionally biased toward low complexity; the sequence is TTTKSRNESTTTTVEAPQA. Residues H177, D178, H181, and E193 each contribute to the Zn(2+) site.

It belongs to the COQ4 family. In terms of assembly, component of a multi-subunit COQ enzyme complex. Requires Zn(2+) as cofactor.

The protein localises to the mitochondrion inner membrane. The enzyme catalyses a 4-hydroxy-3-methoxy-5-(all-trans-polyprenyl)benzoate + H(+) = a 2-methoxy-6-(all-trans-polyprenyl)phenol + CO2. The protein operates within cofactor biosynthesis; ubiquinone biosynthesis. Its function is as follows. Lyase that catalyzes the C1-decarboxylation of 4-hydroxy-3-methoxy-5-(all-trans-polyprenyl)benzoic acid into 2-methoxy-6-(all-trans-polyprenyl)phenol during ubiquinone biosynthesis. In Culex quinquefasciatus (Southern house mosquito), this protein is Ubiquinone biosynthesis protein COQ4 homolog 1, mitochondrial.